The primary structure comprises 938 residues: Protein translocase subunit SecA 1 (938 aa).

Residues glutamine 84, 102–106 (GEGKT), and aspartate 491 contribute to the ATP site. The tract at residues 865–938 (QTGGVATKER…QKTGRHAKRR (74 aa)) is disordered. Basic and acidic residues predominate over residues 918-927 (TRKERREAAR).

The protein belongs to the SecA family. Monomer and homodimer. Part of the essential Sec protein translocation apparatus which comprises SecA, SecYEG and auxiliary proteins SecDF. Other proteins may also be involved.

The protein localises to the cell membrane. It localises to the cytoplasm. The catalysed reaction is ATP + H2O + cellular proteinSide 1 = ADP + phosphate + cellular proteinSide 2.. Part of the Sec protein translocase complex. Interacts with the SecYEG preprotein conducting channel. Has a central role in coupling the hydrolysis of ATP to the transfer of proteins into and across the cell membrane, serving as an ATP-driven molecular motor driving the stepwise translocation of polypeptide chains across the membrane. The chain is Protein translocase subunit SecA 1 from Mycolicibacterium vanbaalenii (strain DSM 7251 / JCM 13017 / BCRC 16820 / KCTC 9966 / NRRL B-24157 / PYR-1) (Mycobacterium vanbaalenii).